The sequence spans 494 residues: Aldehyde dehydrogenase family 7 member A1 (494 aa).

Residue 247 to 252 (GSSKVG) coordinates NAD(+). Residue Glu-269 is the Proton acceptor of the active site. Cys-303 acts as the Nucleophile in catalysis.

It belongs to the aldehyde dehydrogenase family. As to quaternary structure, homotetramer.

It catalyses the reaction an aldehyde + NAD(+) + H2O = a carboxylate + NADH + 2 H(+). This is Aldehyde dehydrogenase family 7 member A1 (BTG-26) from Brassica napus (Rape).